We begin with the raw amino-acid sequence, 346 residues long: Methylthioribose-1-phosphate isomerase (346 aa).

Residues 54–56 (RGA), R91, and Q192 each bind substrate. D233 (proton donor) is an active-site residue. 243-244 (NK) serves as a coordination point for substrate.

It belongs to the eIF-2B alpha/beta/delta subunits family. MtnA subfamily.

It carries out the reaction 5-(methylsulfanyl)-alpha-D-ribose 1-phosphate = 5-(methylsulfanyl)-D-ribulose 1-phosphate. Its pathway is amino-acid biosynthesis; L-methionine biosynthesis via salvage pathway; L-methionine from S-methyl-5-thio-alpha-D-ribose 1-phosphate: step 1/6. Its function is as follows. Catalyzes the interconversion of methylthioribose-1-phosphate (MTR-1-P) into methylthioribulose-1-phosphate (MTRu-1-P). The chain is Methylthioribose-1-phosphate isomerase from Yersinia pseudotuberculosis serotype IB (strain PB1/+).